Here is a 198-residue protein sequence, read N- to C-terminus: ATP-dependent Clp protease proteolytic subunit (198 aa).

Ser-98 acts as the Nucleophile in catalysis. His-123 is an active-site residue.

Belongs to the peptidase S14 family. Fourteen ClpP subunits assemble into 2 heptameric rings which stack back to back to give a disk-like structure with a central cavity, resembling the structure of eukaryotic proteasomes.

It is found in the cytoplasm. It carries out the reaction Hydrolysis of proteins to small peptides in the presence of ATP and magnesium. alpha-casein is the usual test substrate. In the absence of ATP, only oligopeptides shorter than five residues are hydrolyzed (such as succinyl-Leu-Tyr-|-NHMec, and Leu-Tyr-Leu-|-Tyr-Trp, in which cleavage of the -Tyr-|-Leu- and -Tyr-|-Trp bonds also occurs).. Functionally, cleaves peptides in various proteins in a process that requires ATP hydrolysis. Has a chymotrypsin-like activity. Plays a major role in the degradation of misfolded proteins. In Levilactobacillus brevis (strain ATCC 367 / BCRC 12310 / CIP 105137 / JCM 1170 / LMG 11437 / NCIMB 947 / NCTC 947) (Lactobacillus brevis), this protein is ATP-dependent Clp protease proteolytic subunit.